Reading from the N-terminus, the 586-residue chain is Septin-9 (586 aa).

N-acetylmethionine is present on Met1. Low complexity predominate over residues 1–14 (MKKSYSGGTRTSSG). Disordered regions lie at residues 1–49 (MKKS…RVQT), 62–108 (KFQD…SRRT), and 134–268 (RAEV…PASR). A phosphoserine mark is found at Ser22 and Ser30. Phosphothreonine occurs at positions 38, 42, and 49. Lys62 is subject to N6-acetyllysine. Phosphoserine is present on residues Ser82, Ser85, Ser89, and Ser96. Positions 134 to 151 (RAEVLGHKTPEPAPRRTE) are enriched in basic and acidic residues. The residue at position 142 (Thr142) is a Phosphothreonine. At Tyr278 the chain carries Phosphotyrosine. The 273-residue stretch at 295 to 567 (QGFEFNIMVV…EAYRVKRLNE (273 aa)) folds into the Septin-type G domain. A G1 motif region spans residues 305-312 (GQSGLGKS). 305-312 (GQSGLGKS) provides a ligand contact to GTP. Residues Ser327 and Ser332 each carry the phosphoserine modification. GTP contacts are provided by residues Thr339, Gly365, 445 to 453 (KADTLTLEE), Gly501, and Arg516. Positions 362–365 (DTPG) are G3 motif. Residues 444-447 (AKAD) are G4 motif.

This sequence belongs to the TRAFAC class TrmE-Era-EngA-EngB-Septin-like GTPase superfamily. Septin GTPase family. In terms of assembly, septins polymerize into heterooligomeric protein complexes that form filaments, and associate with cellular membranes, actin filaments, and microtubules. GTPase activity is required for filament formation. Interacts with SEPTIN2, SEPTIN6, SEPTIN7, SEPTIN11 and SEPTIN14. Interacts with RTKN and ARHGEF18. In a mesenchymal cell line, Rho/RTKN signals cause disruption of wild-type septin filaments, but not of those containing isoform 2 variants HNA Trp-106 and Phe-111. In a mesenchymal cell line, isoform 2 variants HNA Trp-106 and Phe-111, but not wild type, form filaments with SEPTIN4. In terms of tissue distribution, widely expressed. Isoforms are differentially expressed in testes, kidney, liver heart, spleen, brain, peripheral blood leukocytes, skeletal muscle and kidney. Specific isoforms appear to demonstrate tissue specificity. Isoform 5 is the most highly expressed in fetal tissue. Isoform 1 is detected in all tissues except the brain and thymus, while isoform 2, isoform 3, and isoform 4 are detected at low levels in approximately half of the fetal tissues.

It localises to the cytoplasm. It is found in the cytoskeleton. Its function is as follows. Filament-forming cytoskeletal GTPase. May play a role in cytokinesis (Potential). May play a role in the internalization of 2 intracellular microbial pathogens, Listeria monocytogenes and Shigella flexneri. The sequence is that of Septin-9 from Homo sapiens (Human).